The chain runs to 590 residues: Aspartate--tRNA(Asp/Asn) ligase (590 aa).

Position 175 (Glu-175) interacts with L-aspartate. Residues 199 to 202 form an aspartate region; sequence QQYK. The L-aspartate site is built by Arg-221 and His-450. An ATP-binding site is contributed by 221 to 223; it reads RDE. An ATP-binding site is contributed by Glu-484. Arg-491 contributes to the L-aspartate binding site. Residue 536–539 participates in ATP binding; sequence GVDR.

It belongs to the class-II aminoacyl-tRNA synthetase family. Type 1 subfamily. In terms of assembly, homodimer.

It is found in the cytoplasm. It carries out the reaction tRNA(Asx) + L-aspartate + ATP = L-aspartyl-tRNA(Asx) + AMP + diphosphate. Functionally, aspartyl-tRNA synthetase with relaxed tRNA specificity since it is able to aspartylate not only its cognate tRNA(Asp) but also tRNA(Asn). Reaction proceeds in two steps: L-aspartate is first activated by ATP to form Asp-AMP and then transferred to the acceptor end of tRNA(Asp/Asn). In Bradyrhizobium diazoefficiens (strain JCM 10833 / BCRC 13528 / IAM 13628 / NBRC 14792 / USDA 110), this protein is Aspartate--tRNA(Asp/Asn) ligase.